The following is a 248-amino-acid chain: tRNA1(Val) (adenine(37)-N6)-methyltransferase (248 aa).

Belongs to the methyltransferase superfamily. tRNA (adenine-N(6)-)-methyltransferase family.

It is found in the cytoplasm. It catalyses the reaction adenosine(37) in tRNA1(Val) + S-adenosyl-L-methionine = N(6)-methyladenosine(37) in tRNA1(Val) + S-adenosyl-L-homocysteine + H(+). In terms of biological role, specifically methylates the adenine in position 37 of tRNA(1)(Val) (anticodon cmo5UAC). The protein is tRNA1(Val) (adenine(37)-N6)-methyltransferase of Yersinia pseudotuberculosis serotype O:1b (strain IP 31758).